Here is a 376-residue protein sequence, read N- to C-terminus: Putative transcription factor egl-18 (376 aa).

Disordered regions lie at residues 1–33, 65–122, 148–197, and 240–264; these read MSIS…CSGC, NNEL…LPDF, MVQQ…SDIP, and ATPS…PNAA. The segment covering 9-27 has biased composition (basic and acidic residues); sequence TRPESAEQQHHEVLQRPSD. Low complexity-rich tracts occupy residues 68 to 89 and 165 to 175; these read LKSS…RSSP and QQSVSPPQSKS. Residues 176-195 show a composition bias toward basic and acidic residues; it reads VKIEDPMDQDVKQEESERSD. Positions 241–250 are enriched in polar residues; it reads TPSSQSQDSS. Residues 266-290 form a GATA-type zinc finger; sequence CSNCRTDKTTAWRRDAEGKLVCNPC.

As to expression, expressed in differentiated seam cells. Expressed in the head and trunk.

It is found in the nucleus. In terms of biological role, probable transcription factor. Involved in embryonic development and in vulval development in larvae, acting redundantly, at least in part, with elt-6. Perhaps acting together with elt-6, may form a positive feedback loop to initiate and maintain lin-39 gene expression to ensure proper vulval precursor cell (VPC) fate specification. Together with elt-6, acts as a downstream target of the Wnt/beta-catenin asymmetry pathway, required to adopt or maintain the seam cell fate. Required in seam cells, acting redundantly with elt-6, to promote production of alae, expression of several seam-specific genes and maintenance of seam cells in an unfused state. Plays a role in longevity. May form a transcriptional circuit with GATA factors elt-3 and elt-6. The polypeptide is Putative transcription factor egl-18 (Caenorhabditis elegans).